Reading from the N-terminus, the 369-residue chain is 4-hydroxy-3-methylbut-2-en-1-yl diphosphate synthase (flavodoxin) (369 aa).

The [4Fe-4S] cluster site is built by C270, C273, C305, and E312.

The protein belongs to the IspG family. It depends on [4Fe-4S] cluster as a cofactor.

The catalysed reaction is (2E)-4-hydroxy-3-methylbut-2-enyl diphosphate + oxidized [flavodoxin] + H2O + 2 H(+) = 2-C-methyl-D-erythritol 2,4-cyclic diphosphate + reduced [flavodoxin]. The protein operates within isoprenoid biosynthesis; isopentenyl diphosphate biosynthesis via DXP pathway; isopentenyl diphosphate from 1-deoxy-D-xylulose 5-phosphate: step 5/6. In terms of biological role, converts 2C-methyl-D-erythritol 2,4-cyclodiphosphate (ME-2,4cPP) into 1-hydroxy-2-methyl-2-(E)-butenyl 4-diphosphate. The polypeptide is 4-hydroxy-3-methylbut-2-en-1-yl diphosphate synthase (flavodoxin) (Pseudomonas fluorescens (strain ATCC BAA-477 / NRRL B-23932 / Pf-5)).